The primary structure comprises 274 residues: Basic leucine zipper transcriptional factor ATF-like 2 (274 aa).

3 disordered regions span residues 1-47, 128-151, and 187-229; these read MHLC…ALHQ, GSCY…LLQC, and GSSS…PSSA. One can recognise a bZIP domain in the interval 17 to 80; the sequence is EQQRQLKKQK…AWWSRTLHVH (64 aa). Residues 20 to 41 form a basic motif region; the sequence is RQLKKQKNRAAAQRSRQKHTDK. The segment covering 37–47 has biased composition (basic and acidic residues); the sequence is KHTDKADALHQ. Residues 45–66 are leucine-zipper; sequence LHQQHESLEKDNLALRKEIQSL. Residues 187-196 are compositionally biased toward low complexity; sequence GSSSKLSALQ.

It belongs to the bZIP family. As to quaternary structure, heterodimer; heterodimerizes with JUN family proteins.

It localises to the nucleus. Functionally, AP-1 family transcription factor that controls the differentiation of lineage-specific cells in the immune system. Following infection, participates in the differentiation of CD8(+) thymic conventional dendritic cells in the immune system. Acts via the formation of a heterodimer with JUN family proteins that recognizes and binds DNA sequence 5'-TGA[CG]TCA-3' and regulates expression of target genes. Selectively suppresses CCN1 transcription and hence blocks the downstream cell proliferation signals produced by CCN1 and inhibits CCN1-induced anchorage-independent growth and invasion in several cancer types, such as breast cancer, malignant glioma and metastatic melanoma. Possibly acts by interfering with AP-1 binding to CCN1 promoter. This is Basic leucine zipper transcriptional factor ATF-like 2 (BATF2) from Homo sapiens (Human).